The chain runs to 241 residues: 3-oxoacyl-[acyl-carrier-protein] reductase FabG (241 aa).

Residues 13–16 (GASS), S38, 57–58 (EV), and N83 each bind NADP(+). S135 is a binding site for substrate. Y148 functions as the Proton acceptor in the catalytic mechanism. Residues 148–152 (YCASK) and I181 each bind NADP(+).

Belongs to the short-chain dehydrogenases/reductases (SDR) family. Homotetramer.

It catalyses the reaction a (3R)-hydroxyacyl-[ACP] + NADP(+) = a 3-oxoacyl-[ACP] + NADPH + H(+). It participates in lipid metabolism; fatty acid biosynthesis. Its function is as follows. Catalyzes the NADPH-dependent reduction of beta-ketoacyl-ACP substrates to beta-hydroxyacyl-ACP products, the first reductive step in the elongation cycle of fatty acid biosynthesis. The polypeptide is 3-oxoacyl-[acyl-carrier-protein] reductase FabG (fabG) (Rickettsia prowazekii (strain Madrid E)).